The following is a 628-amino-acid chain: 2-oxoacid:ferredoxin oxidoreductase 2, subunit alpha (628 aa).

The short motif at 254–258 (YPITP) is the YPITP motif element. Residues T257 and R344 each contribute to the substrate site.

In terms of assembly, heterodimer composed of an alpha and a beta subunit.

It catalyses the reaction a 2-oxocarboxylate + 2 oxidized [2Fe-2S]-[ferredoxin] + CoA = an acyl-CoA + 2 reduced [2Fe-2S]-[ferredoxin] + CO2 + H(+). In terms of biological role, catalyzes the coenzyme A-dependent oxidative decarboxylation of different 2-oxoacids such as 2-oxoglutarate, pyruvate and 2-oxobutyrate to form their CoA derivatives. The chain is 2-oxoacid:ferredoxin oxidoreductase 2, subunit alpha from Sulfurisphaera tokodaii (strain DSM 16993 / JCM 10545 / NBRC 100140 / 7) (Sulfolobus tokodaii).